A 323-amino-acid polypeptide reads, in one-letter code: Sphingolipid delta(4)-desaturase/C4-monooxygenase DES2 (323 aa).

Gly2 carries the N-myristoyl glycine lipid modification. Transmembrane regions (helical) follow at residues 41–61 (PNIK…CWLV) and 68–88 (WLLF…TLAI). The Histidine box-1 motif lies at 89 to 93 (HDISH). Residues 95–99 (TAFGT) form a required for C4-hydroxylase activity region. A Histidine box-2 motif is present at residues 128-132 (HVDHH). The helical transmembrane segment at 200–220 (IFALWGIKAIVYLLASSLLGL) threads the bilayer. The Histidine box-3 signature appears at 259–263 (HVEHH).

Belongs to the fatty acid desaturase type 1 family. DEGS subfamily.

The protein resides in the endoplasmic reticulum membrane. The enzyme catalyses a dihydroceramide + 2 Fe(II)-[cytochrome b5] + O2 + 2 H(+) = a phytoceramide + 2 Fe(III)-[cytochrome b5] + H2O. It catalyses the reaction an N-acylsphinganine + 2 Fe(II)-[cytochrome b5] + O2 + 2 H(+) = an N-acylsphing-4-enine + 2 Fe(III)-[cytochrome b5] + 2 H2O. It carries out the reaction N-octanoylsphinganine + 2 Fe(II)-[cytochrome b5] + O2 + 2 H(+) = N-octanoyl-4-hydroxysphinganine + 2 Fe(III)-[cytochrome b5] + H2O. The catalysed reaction is an N-acylsphinganine + 2 Fe(II)-[cytochrome b5] + O2 + 2 H(+) = an N-acyl-(4R)-4-hydroxysphinganine + 2 Fe(III)-[cytochrome b5] + H2O. The protein operates within membrane lipid metabolism; sphingolipid biosynthesis. Bifunctional enzyme which acts both as a sphingolipid delta(4)-desaturase and a sphingolipid C4-monooxygenase. The protein is Sphingolipid delta(4)-desaturase/C4-monooxygenase DES2 of Rattus norvegicus (Rat).